Here is an 847-residue protein sequence, read N- to C-terminus: Leucine--tRNA ligase (847 aa).

The short motif at Pro41–His51 is the 'HIGH' region element. Positions Lys619–Ser623 match the 'KMSKS' region motif. Lys622 provides a ligand contact to ATP.

It belongs to the class-I aminoacyl-tRNA synthetase family.

It is found in the cytoplasm. It carries out the reaction tRNA(Leu) + L-leucine + ATP = L-leucyl-tRNA(Leu) + AMP + diphosphate. This is Leucine--tRNA ligase from Cereibacter sphaeroides (strain ATCC 17029 / ATH 2.4.9) (Rhodobacter sphaeroides).